A 944-amino-acid polypeptide reads, in one-letter code: Trehalose monomycolate exporter MmpL3 (944 aa).

Residues 1-13 (MFAWWGRTVYRYR) are Cytoplasmic-facing. A helical transmembrane segment spans residues 14–34 (FIVIGVMVALCLGGGVFGLSL). The Periplasmic segment spans residues 35 to 185 (GKHVTQSGFY…TIATDQRRME (151 aa)). Residue 40–44 (QSGFY) coordinates a 1,2-diacylglycero-3-phosphoethanolamine. The helical transmembrane segment at 186–206 (VLALPLVAVVLFFVFGGVIAA) threads the bilayer. Over 207–209 (GLP) the chain is Cytoplasmic. Residues 210 to 230 (VMVGGLCIAGALGIMRFLAIF) form a helical membrane-spanning segment. The Periplasmic portion of the chain corresponds to 231–235 (GPVHY). A helical transmembrane segment spans residues 236 to 256 (FAQPVVSLIGLGIAIDYGLFI). Topologically, residues 257–286 (VSRFREEIAEGYDTETAVRRTVITAGRTVT) are cytoplasmic. A helical membrane pass occupies residues 287–307 (FSAVLIVASAIGLLLFPQGFL). Topologically, residues 308 to 314 (KSLTYAT) are periplasmic. Residues 315–335 (IASVMLSAILSITVLPACLGI) form a helical membrane-spanning segment. Residues 336 to 396 (LGKHVDALGV…KLVNRVMKRP (61 aa)) lie on the Cytoplasmic side of the membrane. Residues 397 to 417 (VLFAAPIVIIMILLIIPVGKL) form a helical membrane-spanning segment. At 418–562 (SLGGISEKYL…HGLFAKMPLM (145 aa)) the chain is on the periplasmic side. Residues 563–583 (VVILLTTTIVLMFLAFGSVVL) traverse the membrane as a helical segment. Topologically, residues 584-586 (PIK) are cytoplasmic. A helical transmembrane segment spans residues 587-607 (ATLMSALTLGSTMGILTWIFV). At 608–616 (DGHFSKWLN) the chain is on the periplasmic side. A helical membrane pass occupies residues 617–637 (FTPTPLTAPVIGLIIALVFGL). Topologically, residues 638 to 672 (STDYEVFLVSRMVEARERGMSTQEAIRIGTAATGR) are cytoplasmic. Residues 673–693 (IITAAALIVAVVAGAFVFSDL) form a helical membrane-spanning segment. The Periplasmic segment spans residues 694–698 (VMMKY). A helical membrane pass occupies residues 699–719 (LAFGLMAALLLDATVVRMFLV). Residues 720-944 (PSVMKLLGDD…QDLLRREGRL (225 aa)) lie on the Cytoplasmic side of the membrane. The segment at 778 to 944 (AAGDPRPPHD…QDLLRREGRL (167 aa)) is disordered. A compositionally biased stretch (low complexity) spans 791–828 (PLAESPRPARSSPASSPELTPALEATAAPAAPSGASTT). Over residues 829 to 839 (RMQIGSSTEPP) the composition is skewed to polar residues. Over residues 855-866 (STPPPTPTPPSA) the composition is skewed to pro residues.

The protein belongs to the resistance-nodulation-cell division (RND) (TC 2.A.6) family. MmpL subfamily. Monomer. Interacts with TtfA (via N-terminus); active trehalose monomycolate (TMM) biosynthesis is not required for the complex formation.

It localises to the cell inner membrane. Its subcellular location is the cell septum. It is found in the cell tip. With respect to regulation, inhibited by the antitubercular drug SQ109. Also inhibited by several other compounds such as the pyrrole derivative BM212, the adamantyl urea derivative AU1235, the benzimidazole C215, indoleamides, tetrahydropyrazolo[1,5-a]pyrimidine-3-carboxamide (THPP) and N-benzyl-6',7'-dihydrospiro[piperidine-4,4'-thieno[3,2-c]pyran] (Spiro) analogs. Inhibitory effects of these compounds, including SQ109, are most likely due to their ability to dissipate the transmembrane electrochemical proton gradient. Its function is as follows. Transports trehalose monomycolate (TMM) to the cell wall. Flips TMM across the inner membrane. Membrane potential is not required for this function. Transports probably phosphatidylethanolamine (PE) as well. Binds specifically both TMM and PE, but not trehalose dimycolate (TDM). Also binds diacylglycerol (DAG) and other phospholipids, including phosphatidylglycerol (PG), phosphatidylinositol (PI), and cardiolipin (CDL). Contributes to membrane potential, cell wall composition, antibiotic susceptibility and fitness. Could also be part of a heme-iron acquisition system. Functionally, is the target of the antitubercular drug SQ109. In Mycobacterium tuberculosis (strain ATCC 25618 / H37Rv), this protein is Trehalose monomycolate exporter MmpL3 (mmpL3).